We begin with the raw amino-acid sequence, 333 residues long: Chlorophyllide reductase 35.5 kDa chain (333 aa).

Basic and acidic residues predominate over residues 1 to 17; sequence MTDAPELKAFDQRLRDE. Residues 1 to 30 form a disordered region; sequence MTDAPELKAFDQRLRDEAAEEPTLEVPQGE. ATP is bound by residues 45 to 50 and Lys-74; that span reads GIGKSF. Residue Ser-49 participates in Mg(2+) binding. 2 residues coordinate [4Fe-4S] cluster: Cys-130 and Cys-165. 219 to 220 provides a ligand contact to ATP; sequence NK.

It belongs to the NifH/BchL/ChlL family. As to quaternary structure, homodimer. Chlorophyllide reductase is composed of three subunits; BchX, BchY and BchZ. It depends on [4Fe-4S] cluster as a cofactor.

It carries out the reaction 3-deacetyl-3-vinylbacteriochlorophyllide a + 2 oxidized [2Fe-2S]-[ferredoxin] + ADP + phosphate = chlorophyllide a + 2 reduced [2Fe-2S]-[ferredoxin] + ATP + H2O + H(+). The catalysed reaction is bacteriochlorophyllide a + 2 oxidized [2Fe-2S]-[ferredoxin] + ADP + phosphate = 3-acetyl-3-devinylchlorophyllide a + 2 reduced [2Fe-2S]-[ferredoxin] + ATP + H2O + H(+). The enzyme catalyses 3-deacetyl-3-(1-hydroxyethyl)bacteriochlorophyllide a + 2 oxidized [2Fe-2S]-[ferredoxin] + ADP + phosphate = 3-devinyl-3-(1-hydroxyethyl)chlorophyllide a + 2 reduced [2Fe-2S]-[ferredoxin] + ATP + H2O + H(+). Its pathway is porphyrin-containing compound metabolism; bacteriochlorophyll biosynthesis. Functionally, converts chlorophylls (Chl) into bacteriochlorophylls (BChl) by reducing ring B of the tetrapyrrole. The protein is Chlorophyllide reductase 35.5 kDa chain (bchX) of Cereibacter sphaeroides (strain ATCC 17023 / DSM 158 / JCM 6121 / CCUG 31486 / LMG 2827 / NBRC 12203 / NCIMB 8253 / ATH 2.4.1.) (Rhodobacter sphaeroides).